The sequence spans 806 residues: Leucine--tRNA ligase (806 aa).

The 'HIGH' region signature appears at 40 to 51; it reads PYPSGKGLHVGH. The 'KMSKS' region motif lies at 580-584; the sequence is KMSKS. Residue K583 participates in ATP binding.

Belongs to the class-I aminoacyl-tRNA synthetase family.

It localises to the cytoplasm. It carries out the reaction tRNA(Leu) + L-leucine + ATP = L-leucyl-tRNA(Leu) + AMP + diphosphate. The chain is Leucine--tRNA ligase from Ureaplasma urealyticum serovar 10 (strain ATCC 33699 / Western).